The chain runs to 563 residues: Probable Xaa-Pro aminopeptidase PEPP (563 aa).

4 residues coordinate Mn(2+): D331, D342, E491, and E532.

It belongs to the peptidase M24B family. Mn(2+) is required as a cofactor.

It carries out the reaction Release of any N-terminal amino acid, including proline, that is linked to proline, even from a dipeptide or tripeptide.. In terms of biological role, catalyzes the removal of a penultimate prolyl residue from the N-termini of peptides. The protein is Probable Xaa-Pro aminopeptidase PEPP (PEPP) of Verticillium alfalfae (strain VaMs.102 / ATCC MYA-4576 / FGSC 10136) (Verticillium wilt of alfalfa).